Here is a 436-residue protein sequence, read N- to C-terminus: MSDRQQVTNARGERIAIVSGLRTPFAKQATAFHGVSALDMGKMVVNELLSRSELNPKEIEQLVYGQVVQMPAAPNIAREIVLGTGMDVSTDAYSVTRACATSFQSTVNVAESIMTGNMDIGIAGGADSSSVLPIGVSKKLAHALVDLNKARSFGQKLAIFRRLGLKDLLPVPPAVAEYSTGLSMGQTAEQMAKTYNISRADQDALAHRSHTLATETWNAGKLAEEVMAAHVPPYKSFIDRDNNIRENSTLESYAKLRPAFDRKHGSVTAANSTPLTDGASAVLLMSEGRAKALGYTPIGYIKSYAFTAIDVWQDMLMGPSYATPLALKRAGMELEDLTLIEMHEAFAAQTLANMQMFASKKFAEEKLGRNRAIGEIDMSKFNVLGGSLAYGHPFAATGTRLVTQVCHELKRRGGGTGLATACAAGGLGAAMIVEVE.

Residue Cys99 is the Acyl-thioester intermediate of the active site. Catalysis depends on proton acceptor residues His392 and Cys422.

This sequence belongs to the thiolase-like superfamily. Thiolase family. As to quaternary structure, heterotetramer of two alpha chains (FadJ) and two beta chains (FadI).

The protein localises to the cytoplasm. It carries out the reaction an acyl-CoA + acetyl-CoA = a 3-oxoacyl-CoA + CoA. Its pathway is lipid metabolism; fatty acid beta-oxidation. Its function is as follows. Catalyzes the final step of fatty acid oxidation in which acetyl-CoA is released and the CoA ester of a fatty acid two carbons shorter is formed. This chain is 3-ketoacyl-CoA thiolase, found in Shewanella halifaxensis (strain HAW-EB4).